We begin with the raw amino-acid sequence, 51 residues long: Conotoxin Cal6.33 (51 aa).

The signal sequence occupies residues 1 to 22 (MKLTCVVIIAVLILTACQFTTA). 3 disulfides stabilise this stretch: cysteine 25–cysteine 39, cysteine 32–cysteine 43, and cysteine 38–cysteine 50.

Belongs to the conotoxin O1 superfamily. Expressed by the venom duct.

The protein resides in the secreted. Its function is as follows. Probable neurotoxin. This Californiconus californicus (California cone) protein is Conotoxin Cal6.33.